We begin with the raw amino-acid sequence, 251 residues long: Cytochrome c oxidase subunit 2 (251 aa).

The next 2 membrane-spanning stretches (helical) occupy residues 42–62 (NIMFYLFIILGLVSWMLFTIV) and 83–103 (IIWTMFPAVILLIIAFPSFIL). Residues His-186, Cys-221, Glu-223, Cys-225, His-229, and Met-232 each coordinate Cu cation. Glu-223 is a binding site for Mg(2+).

It belongs to the cytochrome c oxidase subunit 2 family. In terms of assembly, component of the cytochrome c oxidase (complex IV, CIV), a multisubunit enzyme composed of a catalytic core of 3 subunits and several supernumerary subunits. The complex exists as a monomer or a dimer and forms supercomplexes (SCs) in the inner mitochondrial membrane with ubiquinol-cytochrome c oxidoreductase (cytochrome b-c1 complex, complex III, CIII). Requires Cu cation as cofactor.

It is found in the mitochondrion inner membrane. It carries out the reaction 4 Fe(II)-[cytochrome c] + O2 + 8 H(+)(in) = 4 Fe(III)-[cytochrome c] + 2 H2O + 4 H(+)(out). Functionally, component of the cytochrome c oxidase, the last enzyme in the mitochondrial electron transport chain which drives oxidative phosphorylation. The respiratory chain contains 3 multisubunit complexes succinate dehydrogenase (complex II, CII), ubiquinol-cytochrome c oxidoreductase (cytochrome b-c1 complex, complex III, CIII) and cytochrome c oxidase (complex IV, CIV), that cooperate to transfer electrons derived from NADH and succinate to molecular oxygen, creating an electrochemical gradient over the inner membrane that drives transmembrane transport and the ATP synthase. Cytochrome c oxidase is the component of the respiratory chain that catalyzes the reduction of oxygen to water. Electrons originating from reduced cytochrome c in the intermembrane space (IMS) are transferred via the dinuclear copper A center (CU(A)) of subunit 2 and heme A of subunit 1 to the active site in subunit 1, a binuclear center (BNC) formed by heme A3 and copper B (CU(B)). The BNC reduces molecular oxygen to 2 water molecules using 4 electrons from cytochrome c in the IMS and 4 protons from the mitochondrial matrix. The chain is Cytochrome c oxidase subunit 2 (COX2) from Candida glabrata (strain ATCC 2001 / BCRC 20586 / JCM 3761 / NBRC 0622 / NRRL Y-65 / CBS 138) (Yeast).